The chain runs to 465 residues: MKGSVFRKKSIQDLIAATSGEKSLKRELGAFDLTLLGIGAIIGTGIFVLTGTGAVTAGPGLTISFVVAALACLFAALSYAEFASSVPVSGSVYTFTYATLGELMAFIIGWDLILEYMLAVSAVSVGWSGYFQSFLSGLGIHLPVALTAAPGAVKGTFTLFNLPAFVIVMAITYLLYLGIKESKRVNNIMVILKILVVLLFIAVAAVYVKPHNWQPFMPMGFGGVFSAAALVFFAFIGFDAVSSAAEETKNPAKDLPKGIIFSLLVCTILYVTVSAIMTGVIPFAQFAGVDHPVSLVLQSAGQNWVAGIIDIGAVLGMTTVMLVMLYGQTRVMFAMSRDGLVPGSLSKVHPKHKTPYVATWFFGTMSALLGSLVPLDELAKLVNIGTLSAFVLISVAVIVLRKKQPDLPRAFKCPGVPVIPGLAILFCLFLILNLGWVTIVRFLVWLLIGLVIYFLYSRKHSKLNQ.

Transmembrane regions (helical) follow at residues 35 to 55 (LLGI…TGAV), 57 to 77 (AGPG…FAAL), 103 to 123 (LMAF…VSAV), 133 to 153 (SFLS…PGAV), 159 to 179 (LFNL…YLGI), 188 to 208 (IMVI…AVYV), 216 to 236 (FMPM…FAFI), 258 to 278 (GIIF…AIMT), 305 to 325 (VAGI…LVML), 355 to 375 (PYVA…LVPL), 380 to 400 (KLVN…VIVL), 413 to 432 (CPGV…FLIL), and 437 to 456 (VTIV…YFLY).

It belongs to the amino acid-polyamine-organocation (APC) superfamily.

The protein localises to the cell membrane. Its activity is regulated as follows. Isoleucine uptake is efficiently reduced in the presence of 100-fold excess valine, leucine, alanine, threonine, serine, cysteine, asparagine, and a nonproteinaceous amino acid 4-azaleucine. Branched-chain amino acid transport system which is involved in the uptake of isoleucine, valine and probably leucine. Can also transport threonine, and is active as a minor serine permease. May be an amino acid permease of rather broad specificity, because several amino acids, albeit at 100-fold excess, are able to prevent isoleucine uptake. Probably does not transport methionine. Together with BraB and BrnQ, plays an important role in the activation of CodY, a branched-chain amino acid-responsive transcriptional regulator that controls the expression of several dozen transcription units in B.subtilis. The sequence is that of Branched-chain amino acid permease BcaP from Bacillus subtilis (strain 168).